Reading from the N-terminus, the 70-residue chain is Small ribosomal subunit protein bS21 (70 aa).

The protein belongs to the bacterial ribosomal protein bS21 family.

This Nitratidesulfovibrio vulgaris (strain ATCC 29579 / DSM 644 / CCUG 34227 / NCIMB 8303 / VKM B-1760 / Hildenborough) (Desulfovibrio vulgaris) protein is Small ribosomal subunit protein bS21.